The following is a 77-amino-acid chain: Acyl carrier protein (77 aa).

The Carrier domain occupies 2 to 77; sequence SDVAEKVKKI…DAIAYIEEKK (76 aa). At Ser-37 the chain carries O-(pantetheine 4'-phosphoryl)serine.

This sequence belongs to the acyl carrier protein (ACP) family. 4'-phosphopantetheine is transferred from CoA to a specific serine of apo-ACP by AcpS. This modification is essential for activity because fatty acids are bound in thioester linkage to the sulfhydryl of the prosthetic group.

The protein resides in the cytoplasm. It functions in the pathway lipid metabolism; fatty acid biosynthesis. In terms of biological role, carrier of the growing fatty acid chain in fatty acid biosynthesis. The chain is Acyl carrier protein from Desulfovibrio desulfuricans (strain ATCC 27774 / DSM 6949 / MB).